Consider the following 529-residue polypeptide: Transcription factor kayak (529 aa).

Over residues 118 to 134 (LQGTDSDNSNASWADAQ) the composition is skewed to polar residues. Disordered stretches follow at residues 118–166 (LQGT…SVNG) and 180–239 (NAGR…CRKR). 2 stretches are compositionally biased toward low complexity: residues 142–153 (TDTSSAHTDSTS) and 182–201 (GRGSTQGSNTNTSNSATPAR). A bZIP domain is found at 219–282 (EEKRRIRRER…NQLEFFLRAH (64 aa)). Positions 221-240 (KRRIRRERNKQAAARCRKRR) are basic motif. The interval 247 to 275 (LTYEVEQLEKKRDGLKKEMETLTDVKNQL) is leucine-zipper. Disordered stretches follow at residues 311-390 (AGSC…PMST) and 493-529 (DGGTGLTPVSGPLVPSQNKHPLELPTPTAEPSKLVSL). Positions 315–332 (DSGSSSHHNNNSNDSSNG) are enriched in low complexity. Over residues 340–350 (SLNSTGRSNSP) the composition is skewed to polar residues. Ser349 bears the Phosphoserine mark. The segment covering 363–375 (DGGLDSSCLLDQD) has biased composition (low complexity). Pro residues predominate over residues 376 to 387 (GPPPSKRFPLPP).

This sequence belongs to the bZIP family. Fos subfamily. As to quaternary structure, homodimer. Heterodimer with Jra. The kay-Jra heterodimer binds more stably to the AP-1 site than either of the two proteins alone.

The protein resides in the nucleus. In terms of biological role, developmentally regulated transcription factor AP-1 binds and recognizes the enhancer DNA sequence: 5'-TGA[CG]TCA-3'. May play a role in the function or determination of a particular subset of cells in the developing embryo. Is able to carry out its function either independently of or in conjunction with Jra. This Drosophila ananassae (Fruit fly) protein is Transcription factor kayak.